We begin with the raw amino-acid sequence, 213 residues long: Ribosomal RNA small subunit methyltransferase G (213 aa).

Residues G75, F80, 128–129 (IE), and R144 each bind S-adenosyl-L-methionine.

This sequence belongs to the methyltransferase superfamily. RNA methyltransferase RsmG family.

The protein localises to the cytoplasm. It carries out the reaction guanosine(527) in 16S rRNA + S-adenosyl-L-methionine = N(7)-methylguanosine(527) in 16S rRNA + S-adenosyl-L-homocysteine. Specifically methylates the N7 position of guanine in position 527 of 16S rRNA. This Brucella suis biovar 1 (strain 1330) protein is Ribosomal RNA small subunit methyltransferase G.